A 471-amino-acid chain; its full sequence is Ubiquitin-conjugating enzyme E2 variant 3 (471 aa).

The UEV domain occupies 2-145; that stretch reads DVNSEPVKKV…EEEPPLGTKS (144 aa). An NAD(+)-binding site is contributed by 183–211; it reads GDLGIAAVLSIMAKSCVDKLVLIDIPENS.

In the N-terminal section; belongs to the ubiquitin-conjugating enzyme family. UEV subfamily. This sequence in the C-terminal section; belongs to the LDH/MDH superfamily. Homodimer.

In terms of biological role, possible negative regulator of polyubiquitination. This is Ubiquitin-conjugating enzyme E2 variant 3 (uevld) from Danio rerio (Zebrafish).